Here is a 508-residue protein sequence, read N- to C-terminus: Photosystem II CP47 reaction center protein (508 aa).

The next 6 membrane-spanning stretches (helical) occupy residues 21–36 (SVHL…WAGS), 101–115 (IILS…IWHW), 140–156 (GIHL…FGAF), 203–218 (IAAG…FHLS), 237–252 (VLSS…AFVV), and 457–472 (TFAL…HGAR).

Belongs to the PsbB/PsbC family. PsbB subfamily. As to quaternary structure, PSII is composed of 1 copy each of membrane proteins PsbA, PsbB, PsbC, PsbD, PsbE, PsbF, PsbH, PsbI, PsbJ, PsbK, PsbL, PsbM, PsbT, PsbX, PsbY, PsbZ, Psb30/Ycf12, at least 3 peripheral proteins of the oxygen-evolving complex and a large number of cofactors. It forms dimeric complexes. Binds multiple chlorophylls. PSII binds additional chlorophylls, carotenoids and specific lipids. serves as cofactor.

It localises to the plastid. The protein resides in the chloroplast thylakoid membrane. One of the components of the core complex of photosystem II (PSII). It binds chlorophyll and helps catalyze the primary light-induced photochemical processes of PSII. PSII is a light-driven water:plastoquinone oxidoreductase, using light energy to abstract electrons from H(2)O, generating O(2) and a proton gradient subsequently used for ATP formation. The chain is Photosystem II CP47 reaction center protein from Adiantum capillus-veneris (Maidenhair fern).